Reading from the N-terminus, the 455-residue chain is Exodeoxyribonuclease 7 large subunit (455 aa).

This sequence belongs to the XseA family. In terms of assembly, heterooligomer composed of large and small subunits.

Its subcellular location is the cytoplasm. The enzyme catalyses Exonucleolytic cleavage in either 5'- to 3'- or 3'- to 5'-direction to yield nucleoside 5'-phosphates.. Bidirectionally degrades single-stranded DNA into large acid-insoluble oligonucleotides, which are then degraded further into small acid-soluble oligonucleotides. This Escherichia fergusonii (strain ATCC 35469 / DSM 13698 / CCUG 18766 / IAM 14443 / JCM 21226 / LMG 7866 / NBRC 102419 / NCTC 12128 / CDC 0568-73) protein is Exodeoxyribonuclease 7 large subunit.